The following is a 317-amino-acid chain: Transaldolase (317 aa).

Lysine 126 serves as the catalytic Schiff-base intermediate with substrate.

The protein belongs to the transaldolase family. Type 1 subfamily. As to quaternary structure, homodimer.

It is found in the cytoplasm. It carries out the reaction D-sedoheptulose 7-phosphate + D-glyceraldehyde 3-phosphate = D-erythrose 4-phosphate + beta-D-fructose 6-phosphate. The protein operates within carbohydrate degradation; pentose phosphate pathway; D-glyceraldehyde 3-phosphate and beta-D-fructose 6-phosphate from D-ribose 5-phosphate and D-xylulose 5-phosphate (non-oxidative stage): step 2/3. In terms of biological role, transaldolase is important for the balance of metabolites in the pentose-phosphate pathway. The sequence is that of Transaldolase from Paraburkholderia xenovorans (strain LB400).